Consider the following 114-residue polypeptide: Adapter SH3BGRL (114 aa).

The interval 13–50 (STAIKKKQQDVLGFLEANKIGFEEKDIAANEENRKWMR) is required for interaction with HER2. Residues 54-71 (PENSRPATGYPLPPQIFN) are required for interaction with PFN1, HER2, and ATG12. The SH3-binding signature appears at 61–67 (TGYPLPP).

This sequence belongs to the SH3BGR family. Monomer. Interacts with PFN1/Profilin-1. Interacts with ERBB2. Interacts with ATG12. Interacts with BECN1. Interacts with translating ribosomes. As to expression, ubiquitous.

The protein localises to the cytoplasm. It is found in the cytosol. Its subcellular location is the cell membrane. In terms of biological role, appears to function as an adapter protein that bridges proteins together or proteins with mRNAs. May function as a ubiquitin ligase-substrate adapter. Additionally, associates with translating cytoplasmic ribosomes and may promote the expression of specific mRNAs. The protein is Adapter SH3BGRL of Homo sapiens (Human).